The following is a 732-amino-acid chain: Probable ATP-dependent RNA helicase DHX35 homolog (732 aa).

Residues 1–50 are disordered; it reads MSYHPGHGHRQEPRKGAGARRGFARPDDSADAPRTGPLIFEERSTENAGA. A Helicase ATP-binding domain is found at 87–251; the sequence is LYMCERYRTI…FEMNETGNSD (165 aa). 100–107 serves as a coordination point for ATP; sequence GETGCGKS. Positions 198 to 201 match the DEAH box motif; the sequence is DEAH. A Helicase C-terminal domain is found at 283–457; that stretch reads AVDTVINIHK…STILQLKALG (175 aa).

This sequence belongs to the DEAD box helicase family. DEAH subfamily.

The enzyme catalyses ATP + H2O = ADP + phosphate + H(+). The chain is Probable ATP-dependent RNA helicase DHX35 homolog from Caenorhabditis elegans.